We begin with the raw amino-acid sequence, 332 residues long: Glycerol-3-phosphate dehydrogenase [NAD(P)+] (332 aa).

NADPH-binding residues include Ser-11, Phe-12, Arg-32, and Lys-106. Residues Lys-106, Gly-134, and Ser-136 each contribute to the sn-glycerol 3-phosphate site. Ala-138 is an NADPH binding site. Sn-glycerol 3-phosphate contacts are provided by Lys-189, Asp-242, Ser-252, Arg-253, and Asn-254. Lys-189 acts as the Proton acceptor in catalysis. Arg-253 contacts NADPH. NADPH contacts are provided by Val-277 and Glu-279.

This sequence belongs to the NAD-dependent glycerol-3-phosphate dehydrogenase family.

It is found in the cytoplasm. It catalyses the reaction sn-glycerol 3-phosphate + NAD(+) = dihydroxyacetone phosphate + NADH + H(+). The catalysed reaction is sn-glycerol 3-phosphate + NADP(+) = dihydroxyacetone phosphate + NADPH + H(+). It participates in membrane lipid metabolism; glycerophospholipid metabolism. In terms of biological role, catalyzes the reduction of the glycolytic intermediate dihydroxyacetone phosphate (DHAP) to sn-glycerol 3-phosphate (G3P), the key precursor for phospholipid synthesis. The protein is Glycerol-3-phosphate dehydrogenase [NAD(P)+] of Clostridium acetobutylicum (strain ATCC 824 / DSM 792 / JCM 1419 / IAM 19013 / LMG 5710 / NBRC 13948 / NRRL B-527 / VKM B-1787 / 2291 / W).